A 407-amino-acid chain; its full sequence is Peptidase T (407 aa).

A Zn(2+)-binding site is contributed by histidine 78. The active site involves aspartate 80. Residue aspartate 141 participates in Zn(2+) binding. Glutamate 175 (proton acceptor) is an active-site residue. The Zn(2+) site is built by glutamate 176, aspartate 198, and histidine 380.

This sequence belongs to the peptidase M20B family. Requires Zn(2+) as cofactor.

The protein localises to the cytoplasm. It carries out the reaction Release of the N-terminal residue from a tripeptide.. Its function is as follows. Cleaves the N-terminal amino acid of tripeptides. The chain is Peptidase T from Clostridium novyi (strain NT).